Here is a 313-residue protein sequence, read N- to C-terminus: Ribosomal RNA small subunit methyltransferase H (313 aa).

Residues 35 to 37 (GGH), Asp55, Phe79, Asp101, and Gln108 contribute to the S-adenosyl-L-methionine site.

The protein belongs to the methyltransferase superfamily. RsmH family.

It is found in the cytoplasm. The catalysed reaction is cytidine(1402) in 16S rRNA + S-adenosyl-L-methionine = N(4)-methylcytidine(1402) in 16S rRNA + S-adenosyl-L-homocysteine + H(+). Its function is as follows. Specifically methylates the N4 position of cytidine in position 1402 (C1402) of 16S rRNA. The chain is Ribosomal RNA small subunit methyltransferase H from Shigella sonnei (strain Ss046).